Here is a 160-residue protein sequence, read N- to C-terminus: Allophycocyanin alpha chain (160 aa).

Asn70 carries the post-translational modification N4-methylasparagine. Cys80 provides a ligand contact to (2R,3E)-phycocyanobilin.

It belongs to the phycobiliprotein family. In terms of assembly, component of the phycobilisome. Heterodimer of an alpha and a beta chain. Post-translationally, contains one covalently linked phycocyanobilin chromophore.

The protein localises to the cellular thylakoid membrane. In terms of biological role, light-harvesting photosynthetic bile pigment-protein from the phycobiliprotein complex. Allophycocyanin has a maximum absorption at approximately 650 nanometers. This Mastigocladus laminosus (Fischerella sp.) protein is Allophycocyanin alpha chain (apcA).